The primary structure comprises 927 residues: Probable UDP-N-acetylglucosamine--peptide N-acetylglucosaminyltransferase SPINDLY (927 aa).

Residues M1–Q31 form a disordered region. TPR repeat units follow at residues G34–N67, V68–N101, A102–Y135, A143–Y176, A177–Y210, A211–F244, A252–Y285, A286–C319, A320–F353, Q355–Y387, and A388–S421. The interval R422 to R927 is catalytic region.

This sequence belongs to the glycosyltransferase 41 family. O-GlcNAc transferase subfamily.

It is found in the nucleus. It catalyses the reaction L-seryl-[protein] + UDP-N-acetyl-alpha-D-glucosamine = 3-O-(N-acetyl-beta-D-glucosaminyl)-L-seryl-[protein] + UDP + H(+). It carries out the reaction L-threonyl-[protein] + UDP-N-acetyl-alpha-D-glucosamine = 3-O-(N-acetyl-beta-D-glucosaminyl)-L-threonyl-[protein] + UDP + H(+). It functions in the pathway protein modification; protein glycosylation. Probable O-linked N-acetylglucosamine transferase (OGT) involved in various processes such as gibberellin (GA) signaling pathway. OGTs catalyze the addition of nucleotide-activated sugars directly onto the polypeptide through O-glycosidic linkage with the hydroxyl of serine or threonine. Probably acts by adding O-linked sugars to yet unknown proteins. The sequence is that of Probable UDP-N-acetylglucosamine--peptide N-acetylglucosaminyltransferase SPINDLY (SPY) from Oryza sativa subsp. japonica (Rice).